Here is a 240-residue protein sequence, read N- to C-terminus: Ubiquinone biosynthesis O-methyltransferase (240 aa).

Residues Arg44, Gly64, Asp85, and Met129 each coordinate S-adenosyl-L-methionine.

This sequence belongs to the methyltransferase superfamily. UbiG/COQ3 family.

The enzyme catalyses a 3-demethylubiquinol + S-adenosyl-L-methionine = a ubiquinol + S-adenosyl-L-homocysteine + H(+). It carries out the reaction a 3-(all-trans-polyprenyl)benzene-1,2-diol + S-adenosyl-L-methionine = a 2-methoxy-6-(all-trans-polyprenyl)phenol + S-adenosyl-L-homocysteine + H(+). It functions in the pathway cofactor biosynthesis; ubiquinone biosynthesis. In terms of biological role, O-methyltransferase that catalyzes the 2 O-methylation steps in the ubiquinone biosynthetic pathway. In Escherichia coli O6:K15:H31 (strain 536 / UPEC), this protein is Ubiquinone biosynthesis O-methyltransferase.